A 1037-amino-acid polypeptide reads, in one-letter code: MEVVGDFEYCKRDLVGHGAFAVVFRGRHRQKTDWEVAIKSINKKNLSKSQILLGKEIKILKELQHENIVALYDVQELPNSVFLVMEYCNGGDLADYLQAKGTLSEDTIRVFLHQIAAAMRILHSKGIIHRDLKPQNILLSYANRRKSNVSGIRIKIADFGFARYLHSNTMAATLCGSPMYMAPEVIMSQHYDAKADLWSIGTVIYQCLVGKPPFQANSPQDLRMFYEKNRSLMPSIPRETSPYLANLLLGLLQRNQKDRMDFEAFFSHPFLEQVPVKKSCPVPVPVYSGPVPGSSCSSSPSCRFASPPSLPDMQHIQEENLSSPPLGPPNYLQVSKDSASNSSKNSSCDTDDFVLVPHNISSDHSYDMPMGTTARRASNEFFMCGGQCQPTVSPHSETAPIPVPTQVRNYQRIEQNLISTASSGTNPHGSPRSAVVRRSNTSPMGFLRVGSCSPVPGDTVQTGGRRLSTGSSRPYSPSPLVGTIPEQFSQCCCGHPQGHEARSRHSSGSPVPQTQAPQSLLLGARLQSAPTLTDIYQNKQKLRKQHSDPVCPSHAGAGYSYSPQPSRPGSLGTSPTKHTGSSPRNSDWFFKTPLPTIIGSPTKTTAPFKIPKTQASSNLLALVTRHGPAESQSKDGNDPRECSHCLSVQGSERHRSEQQQSKAVFGRSVSTGKLSEQQVKAPLGGHQGSTDSLNTERPMDVAPAGACGVMLALPAGTAASARAVLFTVGSPPHSATAPTCTHMVLRTRTTSVGSSSSGGSLCSASGRVCVGSPPGPGLGSSPPGAEGAPSLRYVPYGASPPSLEGLITFEAPELPEETLMEREHTDTLRHLNMMLMFTECVLDLTAVRGGNPELCTSAVSLYQIQESVVVDQISQLSKDWGRVEQLVLYMKAAQLLAASLHLAKAQVKSGKLSPSMAVKQVVKNLNERYKFCITMCKKLTEKLNRFFSDKQRFIDEINSVTAEKLIYNCAVEMVQSAALDEMFQQTEDIVYRYHKAALLLEGLSKILQDPTDVENVHKYKCSIERRLSALCCSTATV.

The region spanning 9–271 (YCKRDLVGHG…FEAFFSHPFL (263 aa)) is the Protein kinase domain. ATP contacts are provided by residues 15 to 23 (VGHGAFAVV) and K39. The active-site Proton acceptor is the D131. The segment at 319–350 (ENLSSPPLGPPNYLQVSKDSASNSSKNSSCDT) is disordered. The span at 335 to 348 (SKDSASNSSKNSSC) shows a compositional bias: low complexity. Residue S430 is modified to Phosphoserine. 4 disordered regions span residues 452–480 (CSPVPGDTVQTGGRRLSTGSSRPYSPSPL), 494–515 (GHPQGHEARSRHSSGSPVPQTQ), 540–594 (QKLR…KTPL), and 626–697 (HGPA…NTER). 2 stretches are compositionally biased toward polar residues: residues 506–515 (SSGSPVPQTQ) and 571–585 (LGTSPTKHTGSSPRN). Over residues 632–643 (QSKDGNDPRECS) the composition is skewed to basic and acidic residues. The span at 658–678 (QQQSKAVFGRSVSTGKLSEQQ) shows a compositional bias: polar residues. Phosphoserine is present on residues S772 and S781. The segment at 813 to 1037 (ELPEETLMER…SALCCSTATV (225 aa)) is CTD-like region.

This sequence belongs to the protein kinase superfamily. Ser/Thr protein kinase family. APG1/unc-51/ULK1 subfamily. In terms of assembly, component of a complex consisting of ATG13/KIAA0652, ULK1 and RB1CC1/FIP200. Interacts (via C-terminus) with ATG13/KIAA0652. Associates with the mammalian target of rapamycin complex 1 (mTORC1) through an interaction with RPTOR. Interacts with SYNGAP1. Autophosphorylated. In response to nutrient limitation, probably phosphorylated and activated by AMPK, leading to activate autophagy. Widely expressed.

It localises to the cytoplasmic vesicle membrane. The enzyme catalyses L-seryl-[protein] + ATP = O-phospho-L-seryl-[protein] + ADP + H(+). The catalysed reaction is L-threonyl-[protein] + ATP = O-phospho-L-threonyl-[protein] + ADP + H(+). Functionally, serine/threonine-protein kinase involved in autophagy in response to starvation. Acts upstream of phosphatidylinositol 3-kinase PIK3C3 to regulate the formation of autophagophores, the precursors of autophagosomes. Part of regulatory feedback loops in autophagy: acts both as a downstream effector and a negative regulator of mammalian target of rapamycin complex 1 (mTORC1) via interaction with RPTOR. Activated via phosphorylation by AMPK, also acts as a negative regulator of AMPK through phosphorylation of the AMPK subunits PRKAA1, PRKAB2 and PRKAG1. May phosphorylate ATG13/KIAA0652, FRS2, FRS3 and RPTOR; however such data need additional evidences. Not involved in ammonia-induced autophagy or in autophagic response of cerebellar granule neurons (CGN) to low potassium concentration. Plays a role early in neuronal differentiation and is required for granule cell axon formation: may govern axon formation via Ras-like GTPase signaling and through regulation of the Rab5-mediated endocytic pathways within developing axons. The protein is Serine/threonine-protein kinase ULK2 (Ulk2) of Mus musculus (Mouse).